The primary structure comprises 120 residues: Large ribosomal subunit protein uL18 (120 aa).

The protein belongs to the universal ribosomal protein uL18 family. As to quaternary structure, part of the 50S ribosomal subunit; part of the 5S rRNA/L5/L18/L25 subcomplex. Contacts the 5S and 23S rRNAs.

This is one of the proteins that bind and probably mediate the attachment of the 5S RNA into the large ribosomal subunit, where it forms part of the central protuberance. This chain is Large ribosomal subunit protein uL18, found in Bacillus cytotoxicus (strain DSM 22905 / CIP 110041 / 391-98 / NVH 391-98).